The chain runs to 197 residues: Putative phosphopantothenoylcysteine decarboxylase (197 aa).

Residues Phe52 and 102-105 contribute to the FMN site; that span reads SANT. Asn139 lines the substrate pocket. The Proton donor role is filled by Cys174.

It belongs to the HFCD (homooligomeric flavin containing Cys decarboxylase) superfamily. In terms of assembly, homotrimer. FMN serves as cofactor.

The catalysed reaction is N-[(R)-4-phosphopantothenoyl]-L-cysteine + H(+) = (R)-4'-phosphopantetheine + CO2. It participates in cofactor biosynthesis; coenzyme A biosynthesis; CoA from (R)-pantothenate: step 3/5. Necessary for the biosynthesis of coenzyme A. Catalyzes the decarboxylation of 4-phosphopantothenoylcysteine to form 4'-phosphopantotheine. In Dictyostelium discoideum (Social amoeba), this protein is Putative phosphopantothenoylcysteine decarboxylase (ppcdc).